Here is an 872-residue protein sequence, read N- to C-terminus: Valine--tRNA ligase (872 aa).

Positions 45–55 match the 'HIGH' region motif; sequence PYPTGNLHIGN. A 'KMSKS' region motif is present at residues 524–528; that stretch reads KMSKS. An ATP-binding site is contributed by Lys-527.

The protein belongs to the class-I aminoacyl-tRNA synthetase family. ValS type 2 subfamily.

It is found in the cytoplasm. The enzyme catalyses tRNA(Val) + L-valine + ATP = L-valyl-tRNA(Val) + AMP + diphosphate. In terms of biological role, catalyzes the attachment of valine to tRNA(Val). As ValRS can inadvertently accommodate and process structurally similar amino acids such as threonine, to avoid such errors, it has a 'posttransfer' editing activity that hydrolyzes mischarged Thr-tRNA(Val) in a tRNA-dependent manner. This is Valine--tRNA ligase from Natronomonas pharaonis (strain ATCC 35678 / DSM 2160 / CIP 103997 / JCM 8858 / NBRC 14720 / NCIMB 2260 / Gabara) (Halobacterium pharaonis).